Reading from the N-terminus, the 96-residue chain is ATP-dependent Clp protease adapter protein ClpS (96 aa).

Belongs to the ClpS family. Binds to the N-terminal domain of the chaperone ClpA.

In terms of biological role, involved in the modulation of the specificity of the ClpAP-mediated ATP-dependent protein degradation. The protein is ATP-dependent Clp protease adapter protein ClpS of Campylobacter jejuni subsp. jejuni serotype O:6 (strain 81116 / NCTC 11828).